Consider the following 333-residue polypeptide: Terpene synthase 2 (333 aa).

The DDxx(x)D/E motif motif lies at 82-87 (DDDLDT). An NDxxSxxxD/E motif motif is present at residues 219 to 227 (NDCVSYAKE).

The protein belongs to the terpene synthase family.

The enzyme catalyses (2E,6E)-farnesyl diphosphate = (E)-beta-farnesene + diphosphate. It carries out the reaction (2E,6E)-farnesyl diphosphate = (1S,2S,4R)-beta-elemene + diphosphate. Its function is as follows. Terpene synthase that converts its substrate farnesyl diphosphate (FPP) into the sesquiterpene (E)-beta-farnesene as major product. Is also able to convert FPP into delta-elemene, beta-elemene, (E)-beta-caryophyllene, 9-epi-(E)-caryophyllene, and a yet unidentified sesquiterpene. The chain is Terpene synthase 2 from Dictyostelium purpureum (Slime mold).